Consider the following 54-residue polypeptide: Large ribosomal subunit protein bL33A (54 aa).

The protein belongs to the bacterial ribosomal protein bL33 family.

In Mesoplasma florum (strain ATCC 33453 / NBRC 100688 / NCTC 11704 / L1) (Acholeplasma florum), this protein is Large ribosomal subunit protein bL33A.